Consider the following 110-residue polypeptide: uncharacterized protein (110 aa).

The disordered stretch occupies residues 1-72 (MWRSSNQRGV…NHRNIHLRNP (72 aa)). Positions 10–23 (VSRRRDKSMRKYTR) are enriched in basic residues. Residues 48–57 (KNTYTGNISS) show a composition bias toward polar residues.

This is an uncharacterized protein from Human herpesvirus 6A (strain Uganda-1102) (HHV-6 variant A).